We begin with the raw amino-acid sequence, 366 residues long: Zinc-regulated GTPase metalloprotein activator 1 (366 aa).

Positions 5–12 (DECPELVP) match the psi-PxLVp motif motif. 31 to 38 (GYLGAGKT) serves as a coordination point for GTP. Zn(2+)-binding residues include C89, C91, and C92. The CXCC motif motif lies at 89–92 (CLCC). Residues 92 to 96 (CSVKD) and 185 to 188 (NKTD) each bind GTP. Residues 258 to 357 (TITFEVPGSV…GEILKKEFIS (100 aa)) enclose the CobW C-terminal domain.

The protein belongs to the SIMIBI class G3E GTPase family. ZNG1 subfamily.

The protein resides in the nucleus. It catalyses the reaction GTP + H2O = GDP + phosphate + H(+). In terms of biological role, zinc chaperone that directly transfers zinc cofactor to target metalloproteins, thereby activating them. Catalyzes zinc insertion into the active site of methionine aminopeptidase METAP1, which function to cleave the initiator methionine from polypeptides during or after protein translation. Mechanistically, the N-terminal psi-PxLVp motif binds to the C6H2-type zinc finger of inactive form of METAP1. After formation of the docked complex, zinc is transferred from the CXCC motif in the GTPase domain of ZNG1 to the zinc binding site in the peptidase domain of METAP1 in a process requiring GTP hydrolysis. GTP/GDP exchange is required for release of active METAP1. This Danio rerio (Zebrafish) protein is Zinc-regulated GTPase metalloprotein activator 1.